Consider the following 530-residue polypeptide: CTP synthase (530 aa).

The segment at 1-267 is amidoligase domain; sequence MTKYVFVTGG…DDFVLNHFKM (267 aa). S13 contributes to the CTP binding site. S13 provides a ligand contact to UTP. Residue 14-19 participates in ATP binding; it reads SLGKGI. Y54 lines the L-glutamine pocket. D71 lines the ATP pocket. Residues D71 and E141 each coordinate Mg(2+). CTP-binding positions include 148 to 150, 188 to 193, and K224; these read DIE and KTKPTQ. Residues 188 to 193 and K224 each bind UTP; that span reads KTKPTQ. An ATP-binding site is contributed by 240 to 242; sequence RDA. The region spanning 292-530 is the Glutamine amidotransferase type-1 domain; it reads KIALVGKYIE…LFKAFIGATM (239 aa). G354 provides a ligand contact to L-glutamine. C381 serves as the catalytic Nucleophile; for glutamine hydrolysis. L-glutamine-binding positions include 382-385, E405, and R463; that span reads LGMQ. Catalysis depends on residues H508 and E510.

The protein belongs to the CTP synthase family. Homotetramer.

The enzyme catalyses UTP + L-glutamine + ATP + H2O = CTP + L-glutamate + ADP + phosphate + 2 H(+). It carries out the reaction L-glutamine + H2O = L-glutamate + NH4(+). It catalyses the reaction UTP + NH4(+) + ATP = CTP + ADP + phosphate + 2 H(+). It participates in pyrimidine metabolism; CTP biosynthesis via de novo pathway; CTP from UDP: step 2/2. With respect to regulation, allosterically activated by GTP, when glutamine is the substrate; GTP has no effect on the reaction when ammonia is the substrate. The allosteric effector GTP functions by stabilizing the protein conformation that binds the tetrahedral intermediate(s) formed during glutamine hydrolysis. Inhibited by the product CTP, via allosteric rather than competitive inhibition. Its function is as follows. Catalyzes the ATP-dependent amination of UTP to CTP with either L-glutamine or ammonia as the source of nitrogen. Regulates intracellular CTP levels through interactions with the four ribonucleotide triphosphates. The protein is CTP synthase of Latilactobacillus sakei subsp. sakei (strain 23K) (Lactobacillus sakei subsp. sakei).